The sequence spans 447 residues: GTPase Der (447 aa).

2 consecutive EngA-type G domains span residues 3-167 (PVVA…NLPD) and 181-354 (IKLA…KSAT). Residues 9-16 (GRPNVGKS), 56-60 (DTGGF), 119-122 (NKAE), 187-194 (GRPNVGKS), 234-238 (DTAGL), and 299-302 (NKWD) contribute to the GTP site. The KH-like domain occupies 355 to 439 (RKMSTPVLTR…PLRIQFKSSQ (85 aa)).

The protein belongs to the TRAFAC class TrmE-Era-EngA-EngB-Septin-like GTPase superfamily. EngA (Der) GTPase family. As to quaternary structure, associates with the 50S ribosomal subunit.

Functionally, GTPase that plays an essential role in the late steps of ribosome biogenesis. In Variovorax paradoxus (strain S110), this protein is GTPase Der.